Consider the following 141-residue polypeptide: Large ribosomal subunit protein uL11 (141 aa).

Belongs to the universal ribosomal protein uL11 family. Part of the ribosomal stalk of the 50S ribosomal subunit. Interacts with L10 and the large rRNA to form the base of the stalk. L10 forms an elongated spine to which 2 L12 dimers bind in a sequential fashion forming a pentameric L10(L12)2(L12)2 complex. In stalled/isolated 50S subunits interacts with RqcH. In terms of processing, one or more lysine residues are methylated.

Forms part of the ribosomal stalk which helps the ribosome interact with GTP-bound translation factors. Required to recruit RqcH, which is part of the ribosome quality control system (RQC), to stalled 50S ribosomal subunits. The sequence is that of Large ribosomal subunit protein uL11 from Bacillus subtilis (strain 168).